The following is a 156-amino-acid chain: C-type lectin lectoxin-Phi2 (156 aa).

The N-terminal stretch at 1–23 (MGRFIFVSLGLLVLAFSLSGIGA) is a signal peptide. Cystine bridges form between Cys-27–Cys-38, Cys-55–Cys-154, and Cys-129–Cys-146. The 122-residue stretch at 34–155 (HNVSCYKLIN…CNRRHRFLCK (122 aa)) folds into the C-type lectin domain. 2 N-linked (GlcNAc...) asparagine glycosylation sites follow: Asn-35 and Asn-109. The Mannose-binding signature appears at 119 to 121 (EPN). Glu-127, Asn-142, and Asp-143 together coordinate Ca(2+).

It belongs to the true venom lectin family. In terms of tissue distribution, expressed by the venom gland.

It localises to the secreted. Functionally, mannose-binding lectin which recognizes specific carbohydrate structures and agglutinates a variety of animal cells by binding to cell-surface glycoproteins and glycolipids. May be a calcium-dependent lectin. The sequence is that of C-type lectin lectoxin-Phi2 from Philodryas olfersii (Green snake).